The primary structure comprises 240 residues: Endonuclease V (240 aa).

The Mg(2+) site is built by Asp-46 and Asp-116.

This sequence belongs to the endonuclease V family. The cofactor is Mg(2+).

The protein resides in the cytoplasm. The catalysed reaction is Endonucleolytic cleavage at apurinic or apyrimidinic sites to products with a 5'-phosphate.. Functionally, DNA repair enzyme involved in the repair of deaminated bases. Selectively cleaves double-stranded DNA at the second phosphodiester bond 3' to a deoxyinosine leaving behind the intact lesion on the nicked DNA. This chain is Endonuclease V, found in Rhodospirillum centenum (strain ATCC 51521 / SW).